The following is a 361-amino-acid chain: Peptide chain release factor 1 (361 aa).

Q236 carries the N5-methylglutamine modification.

The protein belongs to the prokaryotic/mitochondrial release factor family. In terms of processing, methylated by PrmC. Methylation increases the termination efficiency of RF1.

It localises to the cytoplasm. Peptide chain release factor 1 directs the termination of translation in response to the peptide chain termination codons UAG and UAA. The sequence is that of Peptide chain release factor 1 from Levilactobacillus brevis (strain ATCC 367 / BCRC 12310 / CIP 105137 / JCM 1170 / LMG 11437 / NCIMB 947 / NCTC 947) (Lactobacillus brevis).